The chain runs to 324 residues: Acetyl-coenzyme A carboxylase carboxyl transferase subunit alpha (324 aa).

The region spanning 37–291 (KLDKRLDRLK…QEYVLQEWVK (255 aa)) is the CoA carboxyltransferase C-terminal domain.

Belongs to the AccA family. Acetyl-CoA carboxylase is a heterohexamer composed of biotin carboxyl carrier protein (AccB), biotin carboxylase (AccC) and two subunits each of ACCase subunit alpha (AccA) and ACCase subunit beta (AccD).

It localises to the cytoplasm. It carries out the reaction N(6)-carboxybiotinyl-L-lysyl-[protein] + acetyl-CoA = N(6)-biotinyl-L-lysyl-[protein] + malonyl-CoA. It functions in the pathway lipid metabolism; malonyl-CoA biosynthesis; malonyl-CoA from acetyl-CoA: step 1/1. Its function is as follows. Component of the acetyl coenzyme A carboxylase (ACC) complex. First, biotin carboxylase catalyzes the carboxylation of biotin on its carrier protein (BCCP) and then the CO(2) group is transferred by the carboxyltransferase to acetyl-CoA to form malonyl-CoA. This Chlamydia trachomatis serovar L2 (strain ATCC VR-902B / DSM 19102 / 434/Bu) protein is Acetyl-coenzyme A carboxylase carboxyl transferase subunit alpha.